A 265-amino-acid chain; its full sequence is MNSPIDPALVMPDVQSSADTRHIPIQRVGIRGVRHPMLVAGADGAPQPTVANWTLTVALPAEEKGTHMSRFVALLEKYRSVPMTPALFAAMARDMLPLLHAERGDITAAFPYFINKSAPVSGVQSLLDYEVQWIARAAGDQVEFELVVQVPVTSLCPCSKAISEYGAHNQRSHVTVSVVLNGDLAMDRIIRLVEDEGSCELWGLLKRPDEKFVTERAYDNPKFVEDLVRDVAARLAAHPGVARYRVEAENFESIHNHSAYAVVEG.

It belongs to the GTP cyclohydrolase IV family.

The catalysed reaction is GTP + H2O = 7,8-dihydroneopterin 3'-triphosphate + formate + H(+). The protein operates within cofactor biosynthesis; 7,8-dihydroneopterin triphosphate biosynthesis; 7,8-dihydroneopterin triphosphate from GTP: step 1/1. Its function is as follows. Converts GTP to 7,8-dihydroneopterin triphosphate. The sequence is that of GTP cyclohydrolase FolE2 from Bordetella petrii (strain ATCC BAA-461 / DSM 12804 / CCUG 43448).